The sequence spans 483 residues: Spermatogenesis-defective protein 39 homolog (483 aa).

The protein belongs to the SPE39 family. As to quaternary structure, interacts with vps33b. In terms of tissue distribution, high levels detected in liver and small intestine of larvae at 5 days post-fertilization.

The protein localises to the cytoplasm. It localises to the cytoplasmic vesicle. The protein resides in the early endosome. Its subcellular location is the recycling endosome. It is found in the late endosome. Functionally, proposed to be involved in endosomal maturation implicating in part vps33b. In epithelial cells, the vps33b:vipas39 complex may play a role in the apical rab11a-dependent recycling pathway and in the maintenance of the apical-basolateral polarity. May play a role in lysosomal trafficking, probably via association with the core HOPS complex in a discrete population of endosomes; the functions seems to be independent of vps33b. May play a role in vesicular trafficking during spermatogenesis. May be involved in direct or indirect transcriptional regulation of E-cadherin. The sequence is that of Spermatogenesis-defective protein 39 homolog (vipas39) from Danio rerio (Zebrafish).